The primary structure comprises 73 residues: Salivary thrombin inhibitor XC-42 (73 aa).

The first 23 residues, 1 to 23 (MKLQFLFIFIAFCVMLFAQIATA), serve as a signal peptide directing secretion.

In terms of assembly, interacts with human F2 (thrombin). In terms of tissue distribution, salivary gland (at protein level).

It localises to the secreted. Acts as a competitive inhibitor of host thrombin. The protein is Salivary thrombin inhibitor XC-42 of Xenopsylla cheopis (Oriental rat flea).